A 255-amino-acid polypeptide reads, in one-letter code: Glutamate racemase (255 aa).

Substrate is bound by residues 7–8 (DS) and 39–40 (YG). The Proton donor/acceptor role is filled by C70. 71–72 (NT) contacts substrate. The active-site Proton donor/acceptor is C181. Residue 182–183 (TH) coordinates substrate.

This sequence belongs to the aspartate/glutamate racemases family.

It catalyses the reaction L-glutamate = D-glutamate. Its pathway is cell wall biogenesis; peptidoglycan biosynthesis. Functionally, provides the (R)-glutamate required for cell wall biosynthesis. The sequence is that of Glutamate racemase from Helicobacter pylori (strain HPAG1).